Consider the following 319-residue polypeptide: ATP-dependent 6-phosphofructokinase (319 aa).

Gly11 lines the ATP pocket. 21 to 25 (RAVTR) lines the ADP pocket. ATP contacts are provided by residues 72–73 (RF) and 102–105 (GDGS). A Mg(2+)-binding site is contributed by Asp103. 125 to 127 (SID) lines the substrate pocket. The active-site Proton acceptor is Asp127. Residue Arg154 coordinates ADP. Substrate-binding positions include Arg162 and 169–171 (MGR). ADP-binding positions include 185–187 (GAD) and 213–215 (KKH). Residues Glu222, Arg243, and 249-252 (HMQR) contribute to the substrate site.

The protein belongs to the phosphofructokinase type A (PFKA) family. ATP-dependent PFK group I subfamily. Prokaryotic clade 'B1' sub-subfamily. In terms of assembly, homotetramer. Mg(2+) is required as a cofactor.

The protein localises to the cytoplasm. It carries out the reaction beta-D-fructose 6-phosphate + ATP = beta-D-fructose 1,6-bisphosphate + ADP + H(+). It functions in the pathway carbohydrate degradation; glycolysis; D-glyceraldehyde 3-phosphate and glycerone phosphate from D-glucose: step 3/4. Allosterically activated by ADP and other diphosphonucleosides, and allosterically inhibited by phosphoenolpyruvate. In terms of biological role, catalyzes the phosphorylation of D-fructose 6-phosphate to fructose 1,6-bisphosphate by ATP, the first committing step of glycolysis. The sequence is that of ATP-dependent 6-phosphofructokinase from Lactobacillus gasseri (strain ATCC 33323 / DSM 20243 / BCRC 14619 / CIP 102991 / JCM 1131 / KCTC 3163 / NCIMB 11718 / NCTC 13722 / AM63).